The sequence spans 196 residues: Ribonuclease HII (196 aa).

An RNase H type-2 domain is found at 9 to 196; it reads KLVAGVDEVG…KPVRHALGIE (188 aa). Aspartate 15, glutamate 16, and aspartate 107 together coordinate a divalent metal cation.

This sequence belongs to the RNase HII family. Mn(2+) serves as cofactor. The cofactor is Mg(2+).

The protein localises to the cytoplasm. It catalyses the reaction Endonucleolytic cleavage to 5'-phosphomonoester.. In terms of biological role, endonuclease that specifically degrades the RNA of RNA-DNA hybrids. In Aeromonas salmonicida (strain A449), this protein is Ribonuclease HII.